The chain runs to 95 residues: Co-chaperonin GroES (95 aa).

This sequence belongs to the GroES chaperonin family. As to quaternary structure, heptamer of 7 subunits arranged in a ring. Interacts with the chaperonin GroEL.

The protein resides in the cytoplasm. Together with the chaperonin GroEL, plays an essential role in assisting protein folding. The GroEL-GroES system forms a nano-cage that allows encapsulation of the non-native substrate proteins and provides a physical environment optimized to promote and accelerate protein folding. GroES binds to the apical surface of the GroEL ring, thereby capping the opening of the GroEL channel. In Nitratidesulfovibrio vulgaris (strain DSM 19637 / Miyazaki F) (Desulfovibrio vulgaris), this protein is Co-chaperonin GroES.